A 213-amino-acid polypeptide reads, in one-letter code: Cell division protein SepF (213 aa).

Residues 27-103 (VDAPAPRRAP…GSLRGSAPTR (77 aa)) form a disordered region. Composition is skewed to basic and acidic residues over residues 35–51 (APVEDRRYPRRGERFAD) and 72–90 (DEDRFVSRHAPSREFDRPA).

It belongs to the SepF family. In terms of assembly, homodimer. Interacts with FtsZ.

The protein resides in the cytoplasm. Functionally, cell division protein that is part of the divisome complex and is recruited early to the Z-ring. Probably stimulates Z-ring formation, perhaps through the cross-linking of FtsZ protofilaments. Its function overlaps with FtsA. The protein is Cell division protein SepF of Mycobacteroides abscessus (strain ATCC 19977 / DSM 44196 / CCUG 20993 / CIP 104536 / JCM 13569 / NCTC 13031 / TMC 1543 / L948) (Mycobacterium abscessus).